We begin with the raw amino-acid sequence, 443 residues long: BBSome complex member BBS5 homolog (443 aa).

This sequence belongs to the BBS5 family.

The protein resides in the cytoplasm. It localises to the cytoskeleton. The protein localises to the flagellum axoneme. The sequence is that of BBSome complex member BBS5 homolog from Giardia intestinalis (strain ATCC 50803 / WB clone C6) (Giardia lamblia).